Reading from the N-terminus, the 35-residue chain is Probable L,D-transpeptidase ErfK/SrfK (35 aa).

Residues 1-21 form the signal peptide; it reads MRRVKLLCTALMLLASHGALA.

Belongs to the YkuD family.

Its subcellular location is the periplasm. The protein operates within cell wall biogenesis; peptidoglycan biosynthesis. The polypeptide is Probable L,D-transpeptidase ErfK/SrfK (erfK) (Klebsiella aerogenes (Enterobacter aerogenes)).